Consider the following 142-residue polypeptide: Hemoglobin subunit alpha (142 aa).

The Globin domain maps to 2–142; sequence VLSPADKSNV…VSTVLTSKYR (141 aa). Residue serine 4 is modified to Phosphoserine. An N6-succinyllysine mark is found at lysine 8 and lysine 12. Lysine 17 carries the post-translational modification N6-acetyllysine; alternate. Lysine 17 bears the N6-succinyllysine; alternate mark. Phosphotyrosine is present on tyrosine 25. Serine 36 carries the post-translational modification Phosphoserine. An N6-succinyllysine modification is found at lysine 41. Serine 50 is modified (phosphoserine). Histidine 59 contributes to the O2 binding site. Heme b is bound at residue histidine 88. Serine 103 carries the post-translational modification Phosphoserine. Threonine 109 bears the Phosphothreonine mark. Residue serine 125 is modified to Phosphoserine. Threonine 135 and threonine 138 each carry phosphothreonine. The residue at position 139 (serine 139) is a Phosphoserine.

Belongs to the globin family. As to quaternary structure, heterotetramer of two alpha chains and two beta chains. In terms of tissue distribution, red blood cells.

Functionally, involved in oxygen transport from the lung to the various peripheral tissues. Its function is as follows. Hemopressin acts as an antagonist peptide of the cannabinoid receptor CNR1. Hemopressin-binding efficiently blocks cannabinoid receptor CNR1 and subsequent signaling. The chain is Hemoglobin subunit alpha (HBA) from Ursus maritimus (Polar bear).